A 265-amino-acid polypeptide reads, in one-letter code: Orotidine 5'-phosphate decarboxylase (265 aa).

Substrate is bound by residues Asp-38, 60–62 (KTH), 92–101 (DRKFADIGKT), Tyr-218, and Arg-236. Residue Lys-94 is the Proton donor of the active site.

It belongs to the OMP decarboxylase family.

The enzyme catalyses orotidine 5'-phosphate + H(+) = UMP + CO2. Its pathway is pyrimidine metabolism; UMP biosynthesis via de novo pathway; UMP from orotate: step 2/2. In Cyberlindnera fabianii (Yeast), this protein is Orotidine 5'-phosphate decarboxylase (URA3).